A 513-amino-acid chain; its full sequence is Voltage-gated potassium channel regulatory subunit KCNG1 (513 aa).

The Cytoplasmic portion of the chain corresponds to 1 to 224 (MTLLPGDNSD…DMVERPHSGL (224 aa)). Positions 184 to 204 (EEDDALDSEGRDSEGPAEGEG) are disordered. A compositionally biased stretch (basic and acidic residues) spans 191-204 (SEGRDSEGPAEGEG). A helical transmembrane segment spans residues 225–246 (PGKVFACLSVLFVTVTAVNLSV). At 247–267 (STLPSLREEEEQGHCSQMCHN) the chain is on the extracellular side. Residues 268–289 (VFIVESVCVGWFSLEFLLRLIQ) traverse the membrane as a helical segment. Residues 290 to 300 (APSKFAFLRSP) are Cytoplasmic-facing. A helical transmembrane segment spans residues 301-321 (LTLIDLVAILPYYITLLVDGA). The Extracellular portion of the chain corresponds to 322-338 (AAGRRKPGAGNSYLDKV). The helical; Voltage-sensor transmembrane segment at 339-359 (GLVLRVLRALRILYVMRLARH) threads the bilayer. The Cytoplasmic portion of the chain corresponds to 360 to 374 (SLGLQTLGLTARRCT). Residues 375-396 (REFGLLLLFLCVAIALFAPLLY) form a helical membrane-spanning segment. Residues 397-411 (VIENEMADSPEFTSI) lie on the Extracellular side of the membrane. An intramembrane region (helical) is located at residues 412-423 (PACYWWAVITMT). The Selectivity filter signature appears at 424–429 (TVGYGD). The stretch at 424-431 (TVGYGDMV) is an intramembrane region. Residues 432-438 (PRSTPGQ) are Extracellular-facing. Residues 439–467 (VVALSSILSGILLMAFPVTSIFHTFSRSY) traverse the membrane as a helical segment. Residues 468–513 (LELKQEQERVMFRRAQFLIKTKSQLSVSQDSDILFGSASSDTRDNN) are Cytoplasmic-facing.

Belongs to the potassium channel family. G (TC 1.A.1.2) subfamily. Kv6.1/KCNG1 sub-subfamily. As to quaternary structure, heterotetramer with KCNB1. Heterotetramer with KCNB2. In terms of tissue distribution, expressed in brain and placenta, and at much lower levels in kidney and pancreas.

Its subcellular location is the cell membrane. Functionally, regulatory alpha-subunit of the voltage-gated potassium (Kv) channel which, when coassembled with KCNB1 or KCNB2, can modulate their expression and their gating kinetics by acting on deactivation upon repolarization and inactivation during maintained depolarization. Potassium channel subunit that does not form functional channels by itself. The chain is Voltage-gated potassium channel regulatory subunit KCNG1 from Homo sapiens (Human).